The chain runs to 26 residues: Hemocyanin subunit 5 (26 aa).

This sequence belongs to the tyrosinase family. Hemocyanin subfamily. As to expression, hemolymph.

It is found in the secreted. Its subcellular location is the extracellular space. Hemocyanins are copper-containing oxygen carriers occurring freely dissolved in the hemolymph of many mollusks and arthropods. The chain is Hemocyanin subunit 5 from Maja squinado (Mediterranean spider crab).